The chain runs to 26 residues: Dermaseptin-B5 (26 aa).

Residue Val-26 is modified to Valine amide.

It belongs to the frog skin active peptide (FSAP) family. Dermaseptin subfamily. As to expression, expressed by the skin glands.

The protein localises to the secreted. Functionally, possesses a potent antimicrobial activity against Gram-positive and Gram-negative bacteria. Probably acts by disturbing membrane functions with its amphipathic structure. The chain is Dermaseptin-B5 from Phyllomedusa bicolor (Two-colored leaf frog).